A 700-amino-acid polypeptide reads, in one-letter code: Methionine synthase reductase (700 aa).

The region spanning 4 to 147 (FLLLYATQRG…VVEPWIDGLW (144 aa)) is the Flavodoxin-like domain. FMN contacts are provided by residues 10-14 (TQRGQ) and 93-124 (LLGLGDSEYTYFCNGGKVIDKRLQELGAQHFY). A hinge region spans residues 168–247 (TLAQASDAPL…SSLSIPAVSP (80 aa)). 2 positions are modified to phosphoserine: Ser173 and Ser190. The FAD-binding FR-type domain maps to 272-534 (DPIFQVPISK…PRATNSFHLP (263 aa)). Residue Lys292 coordinates NADP(+). FAD-binding positions include 452–455 (RPYS) and 488–491 (GVCT). Residues 611–612 (SR), 626–628 (YVQ), and Asp661 contribute to the NADP(+) site. Trp699 is a binding site for FAD.

In terms of assembly, forms a multiprotein complex with MMACHC, MMADHC and MTR. Requires FAD as cofactor. It depends on FMN as a cofactor.

Its subcellular location is the cytoplasm. It carries out the reaction 2 methylcob(III)alamin-[methionine synthase] + 2 S-adenosyl-L-homocysteine + NADP(+) + H(+) = 2 cob(II)alamin-[methionine synthase] + 2 S-adenosyl-L-methionine + NADPH. The enzyme catalyses 2 cob(II)alamin + A + 2 H2O + 2 H(+) = 2 aquacob(III)alamin + AH2. Key enzyme in methionine and folate homeostasis responsible for the reactivation of methionine synthase (MTR/MS) activity by catalyzing the reductive methylation of MTR-bound cob(II)alamin. Cobalamin (vitamin B12) forms a complex with MTR to serve as an intermediary in methyl transfer reactions that cycles between MTR-bound methylcob(III)alamin and MTR bound-cob(I)alamin forms, and occasional oxidative escape of the cob(I)alamin intermediate during the catalytic cycle leads to the inactive cob(II)alamin species. The processing of cobalamin in the cytosol occurs in a multiprotein complex composed of at least MMACHC, MMADHC, MTRR and MTR which may contribute to shuttle safely and efficiently cobalamin towards MTR in order to produce methionine. Also necessary for the utilization of methyl groups from the folate cycle, thereby affecting transgenerational epigenetic inheritance. Also acts as a molecular chaperone for methionine synthase by stabilizing apoMTR and incorporating methylcob(III)alamin into apoMTR to form the holoenzyme. Also serves as an aquacob(III)alamin reductase by reducing aquacob(III)alamin to cob(II)alamin; this reduction leads to stimulation of the conversion of apoMTR and aquacob(III)alamin to MTR holoenzyme. The polypeptide is Methionine synthase reductase (Mtrr) (Rattus norvegicus (Rat)).